A 188-amino-acid chain; its full sequence is MIVGVRGVLVSKEPSFVHVDVGGVVYEVFISLQSFSALSGNEVKLFTSHVIREDAQLLYGFLELGEKKLFERLIKINGVGPKVAMAICSTYTPSQFAVVLNNKDITAVQRVPGIGPKSAGRILVELSGFDTELIISASEPKSLAVAQASEALESLGFKKDKISKALGSCSAVDTAILVKEALKLLQTI.

Positions 1 to 62 are domain I; that stretch reads MIVGVRGVLV…EDAQLLYGFL (62 aa). Positions 63 to 135 are domain II; the sequence is ELGEKKLFER…LSGFDTELII (73 aa). A flexible linker region spans residues 135-139; the sequence is ISASE. The domain III stretch occupies residues 140-188; it reads PKSLAVAQASEALESLGFKKDKISKALGSCSAVDTAILVKEALKLLQTI.

This sequence belongs to the RuvA family. As to quaternary structure, homotetramer. Forms an RuvA(8)-RuvB(12)-Holliday junction (HJ) complex. HJ DNA is sandwiched between 2 RuvA tetramers; dsDNA enters through RuvA and exits via RuvB. An RuvB hexamer assembles on each DNA strand where it exits the tetramer. Each RuvB hexamer is contacted by two RuvA subunits (via domain III) on 2 adjacent RuvB subunits; this complex drives branch migration. In the full resolvosome a probable DNA-RuvA(4)-RuvB(12)-RuvC(2) complex forms which resolves the HJ.

It localises to the cytoplasm. The RuvA-RuvB-RuvC complex processes Holliday junction (HJ) DNA during genetic recombination and DNA repair, while the RuvA-RuvB complex plays an important role in the rescue of blocked DNA replication forks via replication fork reversal (RFR). RuvA specifically binds to HJ cruciform DNA, conferring on it an open structure. The RuvB hexamer acts as an ATP-dependent pump, pulling dsDNA into and through the RuvAB complex. HJ branch migration allows RuvC to scan DNA until it finds its consensus sequence, where it cleaves and resolves the cruciform DNA. The chain is Holliday junction branch migration complex subunit RuvA from Sulfurimonas denitrificans (strain ATCC 33889 / DSM 1251) (Thiomicrospira denitrificans (strain ATCC 33889 / DSM 1251)).